The chain runs to 277 residues: Putative phosphoenolpyruvate synthase regulatory protein (277 aa).

Gly156 to Thr163 is an ADP binding site.

The protein belongs to the pyruvate, phosphate/water dikinase regulatory protein family. PSRP subfamily.

It carries out the reaction [pyruvate, water dikinase] + ADP = [pyruvate, water dikinase]-phosphate + AMP + H(+). The catalysed reaction is [pyruvate, water dikinase]-phosphate + phosphate + H(+) = [pyruvate, water dikinase] + diphosphate. Bifunctional serine/threonine kinase and phosphorylase involved in the regulation of the phosphoenolpyruvate synthase (PEPS) by catalyzing its phosphorylation/dephosphorylation. The chain is Putative phosphoenolpyruvate synthase regulatory protein from Deinococcus radiodurans (strain ATCC 13939 / DSM 20539 / JCM 16871 / CCUG 27074 / LMG 4051 / NBRC 15346 / NCIMB 9279 / VKM B-1422 / R1).